We begin with the raw amino-acid sequence, 90 residues long: Actobindin-B/C (90 aa).

2 WH2 domains span residues 4 to 21 and 40 to 57; these read TANP…LKHA and DHSS…LKHV. Residues 57–90 are disordered; the sequence is VETQDRSAPVTEGATVKSNNHSALLGEIKSKAQE.

Monomer.

Its function is as follows. Is able to bind two actin monomers at high concentrations of G-actin. Inhibits actin polymerization by sequestering G-actin and stabilizing actin dimers. The polypeptide is Actobindin-B/C (abnB) (Dictyostelium discoideum (Social amoeba)).